Reading from the N-terminus, the 835-residue chain is Adhesion G protein-coupled receptor E5 (835 aa).

Positions 1–20 (MGGRVFLAFCVWLTLPGAET) are cleaved as a signal peptide. At 21–552 (QDSRGCARWC…EDWKLTLITR (532 aa)) the chain is on the extracellular side. Residues 22–63 (DSRGCARWCPQNSSCVNATACRCNPGFSSFSEIITTPTETCD) enclose the EGF-like 1 domain. 15 cysteine pairs are disulfide-bonded: cysteine 26/cysteine 36, cysteine 30/cysteine 42, cysteine 44/cysteine 62, cysteine 68/cysteine 82, cysteine 76/cysteine 91, cysteine 93/cysteine 114, cysteine 120/cysteine 133, cysteine 127/cysteine 142, cysteine 144/cysteine 158, cysteine 164/cysteine 177, cysteine 171/cysteine 186, cysteine 188/cysteine 207, cysteine 213/cysteine 226, cysteine 220/cysteine 235, and cysteine 237/cysteine 256. N-linked (GlcNAc...) asparagine glycosylation is found at asparagine 33 and asparagine 38. An EGF-like 2; calcium-binding domain is found at 64 to 115 (DINECATPSKVSCGKFSDCWNTEGSYDCVCSPGYEPVSGAKTFKNESENTCQ). N-linked (GlcNAc...) asparagine glycosylation occurs at asparagine 108. Residues 116 to 159 (DVDECQQNPRLCKSYGTCVNTLGSYTCQCLPGFKFIPEDPKVCT) enclose the EGF-like 3; calcium-binding domain. In terms of domain architecture, EGF-like 4; calcium-binding spans 160 to 208 (DVNECTSGQNPCHSSTHCLNNVGSYQCRCRPGWQPIPGSPNGPNNTVCE). N-linked (GlcNAc...) asparagine glycosylation occurs at asparagine 203. An EGF-like 5; calcium-binding domain is found at 209–257 (DVDECSSGQHQCDSSTVCFNTVGSYSCRCRPGWKPRHGIPNNQKDTVCE). Residues 349–543 (PFTYISPSNT…AILMAHYDVE (195 aa)) form the GAIN-B domain. 5 N-linked (GlcNAc...) asparagine glycosylation sites follow: asparagine 371, asparagine 406, asparagine 413, asparagine 453, and asparagine 520. 2 disulfide bridges follow: cysteine 495–cysteine 525 and cysteine 513–cysteine 527. Residues 495 to 543 (CAFWKSDSDRGGHWATEGCQVLGSKNGSTTCQCSHLSSFAILMAHYDVE) are GPS. The chain crosses the membrane as a helical span at residues 553–572 (VGLALSLFCLLLCILTFLLV). Topologically, residues 573–581 (RPIQGSRTT) are cytoplasmic. Residues 582-601 (IHLHLCICLFVGSTIFLAGI) form a helical membrane-spanning segment. At 602–620 (ENEGGQVGLRCRLVAGLLH) the chain is on the extracellular side. A helical membrane pass occupies residues 621 to 642 (YCFLAAFCWMSLEGLELYFLVV). The Cytoplasmic portion of the chain corresponds to 643-653 (RVFQGQGLSTR). A helical membrane pass occupies residues 654-674 (WLCLIGYGVPLLIVGVSAAIY). Over 675-691 (SKGYGRPRYCWLDFEQG) the chain is Extracellular. A helical transmembrane segment spans residues 692-712 (FLWSFLGPVTFIILCNAVIFV). At 713-739 (TTVWKLTQKFSEINPDMKKLKKARALT) the chain is on the cytoplasmic side. The helical transmembrane segment at 740-760 (ITAIAQLFLLGCTWVFGLFIF) threads the bilayer. Over 761 to 766 (DDRSLV) the chain is Extracellular. The chain crosses the membrane as a helical span at residues 767 to 789 (LTYVFTILNCLQGAFLYLLHCLL). Over 790–835 (NKKVREEYRKWACLVAGGSKYSEFTSTTSGTGHNQTRALRASESGI) the chain is Cytoplasmic. The span at 814 to 826 (TSTTSGTGHNQTR) shows a compositional bias: polar residues. Residues 814 to 835 (TSTTSGTGHNQTRALRASESGI) form a disordered region. Serine 815 carries the phosphoserine modification. At threonine 816 the chain carries Phosphothreonine. Serine 818 is modified (phosphoserine). At threonine 825 the chain carries Phosphothreonine. Phosphoserine is present on residues serine 831 and serine 833.

The protein belongs to the G-protein coupled receptor 2 family. LN-TM7 subfamily. Forms a heterodimer, consisting of a large extracellular region (alpha subunit) non-covalently linked to a seven-transmembrane moiety (beta subunit). Interacts with complement decay-accelerating factor (DAF). The largest isoform (isoform 1) interacts with chondroitin sulfate. Proteolytically cleaved into 2 subunits, an extracellular alpha subunit and a seven-transmembrane subunit. As to expression, broadly expressed, found on most hematopoietic cells, including activated lymphocytes, monocytes, macrophages, dendritic cells, and granulocytes. Expressed also abundantly by smooth muscle cells. Expressed in thyroid, colorectal, gastric, esophageal and pancreatic carcinomas too. Expression are increased under inflammatory conditions in the CNS of multiple sclerosis and in synovial tissue of patients with rheumatoid arthritis. Increased expression of CD97 in the synovium is accompanied by detectable levels of soluble CD97 in the synovial fluid.

It is found in the cell membrane. It localises to the secreted. The protein resides in the extracellular space. In terms of biological role, receptor potentially involved in both adhesion and signaling processes early after leukocyte activation. Plays an essential role in leukocyte migration. This Homo sapiens (Human) protein is Adhesion G protein-coupled receptor E5.